Consider the following 251-residue polypeptide: Uroporphyrinogen-III synthase (251 aa).

Residues 231–251 form a disordered region; the sequence is PAPNPESLASSIVAFDEENSS.

This sequence belongs to the uroporphyrinogen-III synthase family.

It carries out the reaction hydroxymethylbilane = uroporphyrinogen III + H2O. The protein operates within porphyrin-containing compound metabolism; protoporphyrin-IX biosynthesis; coproporphyrinogen-III from 5-aminolevulinate: step 3/4. Functionally, catalyzes cyclization of the linear tetrapyrrole, hydroxymethylbilane, to the macrocyclic uroporphyrinogen III. The polypeptide is Uroporphyrinogen-III synthase (ups1) (Schizosaccharomyces pombe (strain 972 / ATCC 24843) (Fission yeast)).